The chain runs to 273 residues: Large ribosomal subunit protein uL2 (273 aa).

The segment at 213-261 (WLGKRPQSRGVAMNPVDHPHGGGEGKSSGGRHPVTPWGVPTKGYKTRVN) is disordered.

This sequence belongs to the universal ribosomal protein uL2 family. In terms of assembly, part of the 50S ribosomal subunit. Forms a bridge to the 30S subunit in the 70S ribosome.

Functionally, one of the primary rRNA binding proteins. Required for association of the 30S and 50S subunits to form the 70S ribosome, for tRNA binding and peptide bond formation. It has been suggested to have peptidyltransferase activity; this is somewhat controversial. Makes several contacts with the 16S rRNA in the 70S ribosome. The chain is Large ribosomal subunit protein uL2 from Syntrophotalea carbinolica (strain DSM 2380 / NBRC 103641 / GraBd1) (Pelobacter carbinolicus).